We begin with the raw amino-acid sequence, 212 residues long: Glycerol-3-phosphate acyltransferase (212 aa).

6 helical membrane-spanning segments follow: residues 6–26 (IAVL…GLIL), 56–76 (LAAL…LLAH), 92–112 (LTLI…WLGF), 122–142 (LGVS…AWLL), 150–170 (SSVG…FMPA), and 171–191 (SHEI…LLLW).

This sequence belongs to the PlsY family. In terms of assembly, probably interacts with PlsX.

Its subcellular location is the cell inner membrane. The catalysed reaction is an acyl phosphate + sn-glycerol 3-phosphate = a 1-acyl-sn-glycero-3-phosphate + phosphate. The protein operates within lipid metabolism; phospholipid metabolism. In terms of biological role, catalyzes the transfer of an acyl group from acyl-phosphate (acyl-PO(4)) to glycerol-3-phosphate (G3P) to form lysophosphatidic acid (LPA). This enzyme utilizes acyl-phosphate as fatty acyl donor, but not acyl-CoA or acyl-ACP. The protein is Glycerol-3-phosphate acyltransferase of Zymomonas mobilis subsp. mobilis (strain ATCC 31821 / ZM4 / CP4).